The sequence spans 359 residues: DNA replication and repair protein RecF (359 aa).

30-37 (GQNAQGKT) serves as a coordination point for ATP.

It belongs to the RecF family.

The protein localises to the cytoplasm. The RecF protein is involved in DNA metabolism; it is required for DNA replication and normal SOS inducibility. RecF binds preferentially to single-stranded, linear DNA. It also seems to bind ATP. The polypeptide is DNA replication and repair protein RecF (Lactococcus lactis subsp. cremoris (strain SK11)).